We begin with the raw amino-acid sequence, 444 residues long: tRNA-2-methylthio-N(6)-dimethylallyladenosine synthase (444 aa).

Positions 3–117 (RGLYIESYGC…LPELIMKVKR (115 aa)) constitute an MTTase N-terminal domain. Residues C12, C48, C80, C155, C159, and C162 each coordinate [4Fe-4S] cluster. Residues 141 to 374 (ANGGVSAYVS…LLTKQQLQFN (234 aa)) enclose the Radical SAM core domain. Residues 375 to 441 (KSMEGRVMDV…QNSLEGTVLS (67 aa)) form the TRAM domain.

Belongs to the methylthiotransferase family. MiaB subfamily. As to quaternary structure, monomer. [4Fe-4S] cluster serves as cofactor.

It is found in the cytoplasm. It catalyses the reaction N(6)-dimethylallyladenosine(37) in tRNA + (sulfur carrier)-SH + AH2 + 2 S-adenosyl-L-methionine = 2-methylsulfanyl-N(6)-dimethylallyladenosine(37) in tRNA + (sulfur carrier)-H + 5'-deoxyadenosine + L-methionine + A + S-adenosyl-L-homocysteine + 2 H(+). Functionally, catalyzes the methylthiolation of N6-(dimethylallyl)adenosine (i(6)A), leading to the formation of 2-methylthio-N6-(dimethylallyl)adenosine (ms(2)i(6)A) at position 37 in tRNAs that read codons beginning with uridine. This Anaplasma phagocytophilum (strain HZ) protein is tRNA-2-methylthio-N(6)-dimethylallyladenosine synthase.